The following is a 319-amino-acid chain: Acetyl-coenzyme A carboxylase carboxyl transferase subunit alpha (319 aa).

Positions 35–296 constitute a CoA carboxyltransferase C-terminal domain; the sequence is DLDKEIEQLE…KATLLRQLAE (262 aa).

Belongs to the AccA family. Acetyl-CoA carboxylase is a heterohexamer composed of biotin carboxyl carrier protein (AccB), biotin carboxylase (AccC) and two subunits each of ACCase subunit alpha (AccA) and ACCase subunit beta (AccD).

Its subcellular location is the cytoplasm. The catalysed reaction is N(6)-carboxybiotinyl-L-lysyl-[protein] + acetyl-CoA = N(6)-biotinyl-L-lysyl-[protein] + malonyl-CoA. It functions in the pathway lipid metabolism; malonyl-CoA biosynthesis; malonyl-CoA from acetyl-CoA: step 1/1. In terms of biological role, component of the acetyl coenzyme A carboxylase (ACC) complex. First, biotin carboxylase catalyzes the carboxylation of biotin on its carrier protein (BCCP) and then the CO(2) group is transferred by the carboxyltransferase to acetyl-CoA to form malonyl-CoA. In Vibrio vulnificus (strain CMCP6), this protein is Acetyl-coenzyme A carboxylase carboxyl transferase subunit alpha.